The sequence spans 91 residues: uncharacterized protein (91 aa).

This is an uncharacterized protein from Archaeoglobus fulgidus (strain ATCC 49558 / DSM 4304 / JCM 9628 / NBRC 100126 / VC-16).